The chain runs to 234 residues: Ribitol-5-phosphate cytidylyltransferase (234 aa).

Residues 7 to 10 (LAGG) and 79 to 85 (GSIVQKS) contribute to the CTP site.

This sequence belongs to the IspD/TarI cytidylyltransferase family. TarI subfamily.

It carries out the reaction D-ribitol 5-phosphate + CTP + H(+) = CDP-L-ribitol + diphosphate. Its pathway is cell wall biogenesis; poly(ribitol phosphate) teichoic acid biosynthesis. In terms of biological role, catalyzes the transfer of the cytidylyl group of CTP to D-ribitol 5-phosphate. This is Ribitol-5-phosphate cytidylyltransferase from Lacticaseibacillus paracasei (strain ATCC 334 / BCRC 17002 / CCUG 31169 / CIP 107868 / KCTC 3260 / NRRL B-441) (Lactobacillus paracasei).